Here is a 273-residue protein sequence, read N- to C-terminus: Large ribosomal subunit protein uL2 (273 aa).

The disordered stretch occupies residues G222 to K273. Positions S264–K273 are enriched in basic and acidic residues.

This sequence belongs to the universal ribosomal protein uL2 family. In terms of assembly, part of the 50S ribosomal subunit. Forms a bridge to the 30S subunit in the 70S ribosome.

Functionally, one of the primary rRNA binding proteins. Required for association of the 30S and 50S subunits to form the 70S ribosome, for tRNA binding and peptide bond formation. It has been suggested to have peptidyltransferase activity; this is somewhat controversial. Makes several contacts with the 16S rRNA in the 70S ribosome. This is Large ribosomal subunit protein uL2 from Syntrophobacter fumaroxidans (strain DSM 10017 / MPOB).